Consider the following 159-residue polypeptide: 6,7-dimethyl-8-ribityllumazine synthase (159 aa).

5-amino-6-(D-ribitylamino)uracil-binding positions include phenylalanine 23, 58 to 60 (AYE), and 82 to 84 (TII). Histidine 90 serves as the catalytic Proton donor. Position 115 (leucine 115) interacts with 5-amino-6-(D-ribitylamino)uracil. (2S)-2-hydroxy-3-oxobutyl phosphate is bound at residue arginine 129.

Belongs to the DMRL synthase family. As to quaternary structure, forms an icosahedral capsid composed of 60 subunits, arranged as a dodecamer of pentamers.

The enzyme catalyses (2S)-2-hydroxy-3-oxobutyl phosphate + 5-amino-6-(D-ribitylamino)uracil = 6,7-dimethyl-8-(1-D-ribityl)lumazine + phosphate + 2 H2O + H(+). Its pathway is cofactor biosynthesis; riboflavin biosynthesis; riboflavin from 2-hydroxy-3-oxobutyl phosphate and 5-amino-6-(D-ribitylamino)uracil: step 1/2. Catalyzes the formation of 6,7-dimethyl-8-ribityllumazine by condensation of 5-amino-6-(D-ribitylamino)uracil with 3,4-dihydroxy-2-butanone 4-phosphate. This is the penultimate step in the biosynthesis of riboflavin. The chain is 6,7-dimethyl-8-ribityllumazine synthase from Blochmanniella floridana.